We begin with the raw amino-acid sequence, 532 residues long: Putative cysteine ligase BshC (532 aa).

Residues 431–451 (MAQAKDALAKVDASLVEAAER) adopt a coiled-coil conformation.

The protein belongs to the BshC family.

The protein is Putative cysteine ligase BshC of Koribacter versatilis (strain Ellin345).